A 233-amino-acid polypeptide reads, in one-letter code: Biosynthetic peptidoglycan transglycosylase (233 aa).

A helical transmembrane segment spans residues Leu-4–Leu-24.

Belongs to the glycosyltransferase 51 family.

The protein resides in the cell inner membrane. The catalysed reaction is [GlcNAc-(1-&gt;4)-Mur2Ac(oyl-L-Ala-gamma-D-Glu-L-Lys-D-Ala-D-Ala)](n)-di-trans,octa-cis-undecaprenyl diphosphate + beta-D-GlcNAc-(1-&gt;4)-Mur2Ac(oyl-L-Ala-gamma-D-Glu-L-Lys-D-Ala-D-Ala)-di-trans,octa-cis-undecaprenyl diphosphate = [GlcNAc-(1-&gt;4)-Mur2Ac(oyl-L-Ala-gamma-D-Glu-L-Lys-D-Ala-D-Ala)](n+1)-di-trans,octa-cis-undecaprenyl diphosphate + di-trans,octa-cis-undecaprenyl diphosphate + H(+). Its pathway is cell wall biogenesis; peptidoglycan biosynthesis. Its function is as follows. Peptidoglycan polymerase that catalyzes glycan chain elongation from lipid-linked precursors. The chain is Biosynthetic peptidoglycan transglycosylase from Cupriavidus metallidurans (strain ATCC 43123 / DSM 2839 / NBRC 102507 / CH34) (Ralstonia metallidurans).